The primary structure comprises 450 residues: ATP-dependent protease ATPase subunit HslU (450 aa).

ATP-binding positions include valine 29, glycine 71–glutamate 76, aspartate 261, glutamate 328, and arginine 400.

This sequence belongs to the ClpX chaperone family. HslU subfamily. A double ring-shaped homohexamer of HslV is capped on each side by a ring-shaped HslU homohexamer. The assembly of the HslU/HslV complex is dependent on binding of ATP.

It localises to the cytoplasm. Functionally, ATPase subunit of a proteasome-like degradation complex; this subunit has chaperone activity. The binding of ATP and its subsequent hydrolysis by HslU are essential for unfolding of protein substrates subsequently hydrolyzed by HslV. HslU recognizes the N-terminal part of its protein substrates and unfolds these before they are guided to HslV for hydrolysis. The polypeptide is ATP-dependent protease ATPase subunit HslU (Rickettsia prowazekii (strain Madrid E)).